A 533-amino-acid polypeptide reads, in one-letter code: Calcineurin-interacting protein 3 (533 aa).

Disordered stretches follow at residues 1-30 (MRSLKRENSGSALSVRSSDSEGDSYHNMDI), 53-85 (PRKQRSCHKRAEPVSEEHRKKESSKNSREYTKR), and 359-404 (MDMS…LTLP). Over residues 61–85 (KRAEPVSEEHRKKESSKNSREYTKR) the composition is skewed to basic and acidic residues. The segment covering 359–372 (MDMSQTLSPEQTLS) has biased composition (polar residues). The span at 373–384 (PREKLQVQDRKI) shows a compositional bias: basic and acidic residues.

It is found in the nucleus. The chain is Calcineurin-interacting protein 3 from Caenorhabditis elegans.